The following is a 302-amino-acid chain: MLSQYLRKHHLLSRRHQFMRCASQSRSPPRSLLQRQAKRRGEAEAVAPSQLIVTSLKDIFSTFQPSGFTQEDDELEAVKQREDAMQRLENGELRELLLHKFGARRIPSTTETGNSVGDLRIPPRNINQAFHNLTTQERELIEVFQSLGTPSMNWRDVPLVSKQLQFYISFGSYGPREGITFLGSKPEDFIWSKTSRRLLPGQTVRKLPKDATTNTWTCIPSRKANFERMKKGLDPGTRIIAWLGILIVMIASVRDYKQRRDSEATVKVSEFTEQETSEPQAAQQDTAPISKTPKSWYQFWKS.

Residues Met-1–Cys-21 constitute a mitochondrion transit peptide. The disordered stretch occupies residues Arg-20–Glu-44. Residues Gly-236 to Val-253 form a helical membrane-spanning segment. The disordered stretch occupies residues Ala-264 to Ser-290. The span at Ser-277–Ser-290 shows a compositional bias: polar residues.

It belongs to the GEP7 family.

The protein resides in the mitochondrion membrane. Its function is as follows. Involved in respiratory growth and required for cell survival in the absence of prohibitins. This is Genetic interactor of prohibitin 7, mitochondrial (GEP7) from Lachancea thermotolerans (strain ATCC 56472 / CBS 6340 / NRRL Y-8284) (Yeast).